Consider the following 117-residue polypeptide: Ribosome-binding factor A (117 aa).

It belongs to the RbfA family. Monomer. Binds 30S ribosomal subunits, but not 50S ribosomal subunits or 70S ribosomes.

It is found in the cytoplasm. One of several proteins that assist in the late maturation steps of the functional core of the 30S ribosomal subunit. Associates with free 30S ribosomal subunits (but not with 30S subunits that are part of 70S ribosomes or polysomes). Required for efficient processing of 16S rRNA. May interact with the 5'-terminal helix region of 16S rRNA. This Leptospira borgpetersenii serovar Hardjo-bovis (strain JB197) protein is Ribosome-binding factor A.